The following is a 459-amino-acid chain: Ribulose bisphosphate carboxylase large chain (459 aa).

Substrate is bound by residues N98 and T148. K150 (proton acceptor) is an active-site residue. Residue K152 participates in substrate binding. K176, D178, and E179 together coordinate Mg(2+). Residue K176 is modified to N6-carboxylysine. H268 (proton acceptor) is an active-site residue. R269, H301, and S353 together coordinate substrate.

The protein belongs to the RuBisCO large chain family. Type I subfamily. As to quaternary structure, heterohexadecamer of 8 large chains and 8 small chains. Requires Mg(2+) as cofactor.

It is found in the plastid. It localises to the chloroplast. It catalyses the reaction 2 (2R)-3-phosphoglycerate + 2 H(+) = D-ribulose 1,5-bisphosphate + CO2 + H2O. It carries out the reaction D-ribulose 1,5-bisphosphate + O2 = 2-phosphoglycolate + (2R)-3-phosphoglycerate + 2 H(+). In terms of biological role, ruBisCO catalyzes two reactions: the carboxylation of D-ribulose 1,5-bisphosphate, the primary event in carbon dioxide fixation, as well as the oxidative fragmentation of the pentose substrate in the photorespiration process. Both reactions occur simultaneously and in competition at the same active site. The protein is Ribulose bisphosphate carboxylase large chain (rbcL) of Calyptrosphaera sphaeroidea.